The sequence spans 373 residues: Histidinol-phosphate aminotransferase (373 aa).

K233 carries the N6-(pyridoxal phosphate)lysine modification.

This sequence belongs to the class-II pyridoxal-phosphate-dependent aminotransferase family. Histidinol-phosphate aminotransferase subfamily. As to quaternary structure, homodimer. Pyridoxal 5'-phosphate is required as a cofactor.

The enzyme catalyses L-histidinol phosphate + 2-oxoglutarate = 3-(imidazol-4-yl)-2-oxopropyl phosphate + L-glutamate. Its pathway is amino-acid biosynthesis; L-histidine biosynthesis; L-histidine from 5-phospho-alpha-D-ribose 1-diphosphate: step 7/9. In Nitratidesulfovibrio vulgaris (strain DP4) (Desulfovibrio vulgaris), this protein is Histidinol-phosphate aminotransferase.